The sequence spans 705 residues: Polyribonucleotide nucleotidyltransferase (705 aa).

Positions 486 and 492 each coordinate Mg(2+). The region spanning 553-612 (PRIHTIRINPDKIKDVIGKGGSVIRALTEETGTTIEIEDDGTVKIAATDGEKAKFAIRRI) is the KH domain. An S1 motif domain is found at 622–690 (GRIYQGKVTR…RQGRVRLSIK (69 aa)).

This sequence belongs to the polyribonucleotide nucleotidyltransferase family. In terms of assembly, component of the RNA degradosome, which is a multiprotein complex involved in RNA processing and mRNA degradation. It depends on Mg(2+) as a cofactor.

Its subcellular location is the cytoplasm. The enzyme catalyses RNA(n+1) + phosphate = RNA(n) + a ribonucleoside 5'-diphosphate. In terms of biological role, involved in mRNA degradation. Catalyzes the phosphorolysis of single-stranded polyribonucleotides processively in the 3'- to 5'-direction. This Serratia proteamaculans (strain 568) protein is Polyribonucleotide nucleotidyltransferase.